We begin with the raw amino-acid sequence, 113 residues long: Hydrogenase maturation factor HypA (113 aa).

Residue His2 coordinates Ni(2+). Zn(2+) contacts are provided by Cys73, Cys76, Cys89, and Cys92.

The protein belongs to the HypA/HybF family.

Functionally, involved in the maturation of [NiFe] hydrogenases. Required for nickel insertion into the metal center of the hydrogenase. This Prosthecochloris aestuarii (strain DSM 271 / SK 413) protein is Hydrogenase maturation factor HypA.